Here is a 417-residue protein sequence, read N- to C-terminus: Calreticulin (417 aa).

Residues 1 to 17 (MLLSVPLLLGLLGLAAA) form the signal peptide. The segment at 18–197 (EPAVYFKEQF…NSQVESGSLE (180 aa)) is N-domain. Ca(2+) is bound at residue Gln26. Position 48 is an N6-acetyllysine (Lys48). Lys62 and Lys64 together coordinate Ca(2+). A disulfide bond links Cys105 and Cys137. 4 residues coordinate an alpha-D-glucoside: Tyr109, Lys111, Tyr128, and Asp135. N6-acetyllysine is present on Lys159. Residues 191-202 (VESGSLEDDWDF) form a 1-1 repeat. Residues 191–255 (VESGSLEDDW…DAKKPEDWDE (65 aa)) are 4 X approximate repeats. The segment at 193 to 278 (SGSLEDDWDF…PEYKGEWKPR (86 aa)) is disordered. A P-domain region spans residues 198 to 308 (DDWDFLPPKK…YSPDPSIYAY (111 aa)). The span at 207-251 (KIKDPDASKPEDWDERAKIDDPTDSKPEDWDKPEHIPDPDAKKPE) shows a compositional bias: basic and acidic residues. Lys209 is modified (N6-acetyllysine). 6 consecutive repeat copies span residues 210–221 (DPDASKPEDWDE), 227–238 (DPTDSKPEDWDK), 244–255 (DPDAKKPEDWDE), 259–269 (GEWEPPVIQNP), 273–283 (GEWKPRQIDNP), and 287–297 (GTWIHPEIDNP). The interval 237 to 270 (DKPEHIPDPDAKKPEDWDEEMDGEWEPPVIQNPE) is interaction with PPIB. Residues 252–261 (DWDEEMDGEW) show a composition bias toward acidic residues. The segment at 259–297 (GEWEPPVIQNPEYKGEWKPRQIDNPDYKGTWIHPEIDNP) is 3 X approximate repeats. A C-domain region spans residues 309–417 (DNFGVLGLDL…DVPGQAKDEL (109 aa)). Residue Asp317 coordinates an alpha-D-glucoside. Residue Asp328 coordinates Ca(2+). The disordered stretch occupies residues 350–417 (TKAAEKQMKD…DVPGQAKDEL (68 aa)). A compositionally biased stretch (basic and acidic residues) spans 352 to 379 (AAEKQMKDKQDEEQRLKEEEEDKKRKEE). Residues 380-409 (EEAEDKEDDEDKDEDEEDEEDKEEDEEEDV) are compositionally biased toward acidic residues. The Prevents secretion from ER signature appears at 414–417 (KDEL).

The protein belongs to the calreticulin family. As to quaternary structure, monomer. Component of an EIF2 complex at least composed of CELF1/CUGBP1, CALR, CALR3, EIF2S1, EIF2S2, HSP90B1 and HSPA5. Interacts with PDIA3/ERp57 and SPACA9. Interacts with TRIM21. Interacts with NR3C1. Interacts with PPIB. Interacts (via P-domain) with PDIA5. Interacts with GABARAP. Interacts with CLCC1.

The protein localises to the endoplasmic reticulum lumen. The protein resides in the cytoplasm. It is found in the cytosol. Its subcellular location is the secreted. It localises to the extracellular space. The protein localises to the extracellular matrix. The protein resides in the cell surface. It is found in the sarcoplasmic reticulum lumen. Its subcellular location is the cytoplasmic vesicle. It localises to the secretory vesicle. The protein localises to the cortical granule. The protein resides in the cytoplasmic granule. In terms of biological role, calcium-binding chaperone that promotes folding, oligomeric assembly and quality control in the endoplasmic reticulum (ER) via the calreticulin/calnexin cycle. This lectin interacts transiently with almost all of the monoglucosylated glycoproteins that are synthesized in the ER. Interacts with the DNA-binding domain of NR3C1 and mediates its nuclear export. Involved in maternal gene expression regulation. May participate in oocyte maturation via the regulation of calcium homeostasis. This is Calreticulin (CALR) from Chlorocebus aethiops (Green monkey).